The following is a 313-amino-acid chain: tRNA dimethylallyltransferase 2 (313 aa).

Residue Gly-16 to Thr-23 participates in ATP binding. Residue Thr-18–Thr-23 participates in substrate binding. Interaction with substrate tRNA regions lie at residues Asp-41–Gln-44 and Gln-161–Arg-165.

The protein belongs to the IPP transferase family. As to quaternary structure, monomer. Mg(2+) is required as a cofactor.

It carries out the reaction adenosine(37) in tRNA + dimethylallyl diphosphate = N(6)-dimethylallyladenosine(37) in tRNA + diphosphate. In terms of biological role, catalyzes the transfer of a dimethylallyl group onto the adenine at position 37 in tRNAs that read codons beginning with uridine, leading to the formation of N6-(dimethylallyl)adenosine (i(6)A). This is tRNA dimethylallyltransferase 2 from Pelobacter propionicus (strain DSM 2379 / NBRC 103807 / OttBd1).